Reading from the N-terminus, the 514-residue chain is tRNA-2-methylthio-N(6)-dimethylallyladenosine synthase (514 aa).

Positions 1–21 (MNEEQRKASSVDVLAERDKKA) are disordered. One can recognise an MTTase N-terminal domain in the interval 68-186 (RTFLIKTYGC…LPEILEEAYL (119 aa)). [4Fe-4S] cluster is bound by residues Cys-77, Cys-113, Cys-147, Cys-223, Cys-227, and Cys-230. One can recognise a Radical SAM core domain in the interval 209 to 440 (REGNIKAWVN…KKVGHYSQIA (232 aa)). In terms of domain architecture, TRAM spans 442 to 505 (SKYEGQTVTV…QYSLNGSFIK (64 aa)).

This sequence belongs to the methylthiotransferase family. MiaB subfamily. As to quaternary structure, monomer. [4Fe-4S] cluster is required as a cofactor.

It localises to the cytoplasm. It catalyses the reaction N(6)-dimethylallyladenosine(37) in tRNA + (sulfur carrier)-SH + AH2 + 2 S-adenosyl-L-methionine = 2-methylsulfanyl-N(6)-dimethylallyladenosine(37) in tRNA + (sulfur carrier)-H + 5'-deoxyadenosine + L-methionine + A + S-adenosyl-L-homocysteine + 2 H(+). Functionally, catalyzes the methylthiolation of N6-(dimethylallyl)adenosine (i(6)A), leading to the formation of 2-methylthio-N6-(dimethylallyl)adenosine (ms(2)i(6)A) at position 37 in tRNAs that read codons beginning with uridine. This Staphylococcus aureus (strain USA300 / TCH1516) protein is tRNA-2-methylthio-N(6)-dimethylallyladenosine synthase.